A 298-amino-acid chain; its full sequence is Elongation factor Ts (298 aa).

The involved in Mg(2+) ion dislocation from EF-Tu stretch occupies residues 79-82; sequence TDFV.

The protein belongs to the EF-Ts family.

The protein localises to the cytoplasm. In terms of biological role, associates with the EF-Tu.GDP complex and induces the exchange of GDP to GTP. It remains bound to the aminoacyl-tRNA.EF-Tu.GTP complex up to the GTP hydrolysis stage on the ribosome. This chain is Elongation factor Ts (tsf), found in Mycoplasma genitalium (strain ATCC 33530 / DSM 19775 / NCTC 10195 / G37) (Mycoplasmoides genitalium).